The following is a 282-amino-acid chain: Pantothenate synthetase (282 aa).

30–37 (MGYLHEGH) serves as a coordination point for ATP. His-37 acts as the Proton donor in catalysis. Gln-61 is a binding site for (R)-pantoate. Residue Gln-61 coordinates beta-alanine. ATP is bound at residue 147 to 150 (GMKD). Gln-153 contributes to the (R)-pantoate binding site. ATP contacts are provided by residues Val-176 and 184–187 (KSSR).

It belongs to the pantothenate synthetase family. Homodimer.

It localises to the cytoplasm. The enzyme catalyses (R)-pantoate + beta-alanine + ATP = (R)-pantothenate + AMP + diphosphate + H(+). It functions in the pathway cofactor biosynthesis; (R)-pantothenate biosynthesis; (R)-pantothenate from (R)-pantoate and beta-alanine: step 1/1. Its function is as follows. Catalyzes the condensation of pantoate with beta-alanine in an ATP-dependent reaction via a pantoyl-adenylate intermediate. The sequence is that of Pantothenate synthetase from Bacillus thuringiensis (strain Al Hakam).